The primary structure comprises 119 residues: Holo-[acyl-carrier-protein] synthase (119 aa).

Mg(2+) contacts are provided by aspartate 8 and glutamate 59.

It belongs to the P-Pant transferase superfamily. AcpS family. Requires Mg(2+) as cofactor.

It localises to the cytoplasm. It carries out the reaction apo-[ACP] + CoA = holo-[ACP] + adenosine 3',5'-bisphosphate + H(+). Functionally, transfers the 4'-phosphopantetheine moiety from coenzyme A to a Ser of acyl-carrier-protein. The protein is Holo-[acyl-carrier-protein] synthase of Streptococcus agalactiae serotype Ia (strain ATCC 27591 / A909 / CDC SS700).